The following is a 34-amino-acid chain: Histone H1, sperm (34 aa).

The interval 1–34 is disordered; it reads PASPQKRAASPRRSPKKSPRKSPKKSPRKRSASP. Residues 9–34 show a composition bias toward basic residues; it reads ASPRRSPKKSPRKSPKKSPRKRSASP.

This sequence belongs to the histone H1/H5 family. Sperm.

Its subcellular location is the nucleus. It is found in the chromosome. In terms of biological role, histones H1 are necessary for the condensation of nucleosome chains into higher-order structures. This chain is Histone H1, sperm, found in Strongylocentrotus purpuratus (Purple sea urchin).